Reading from the N-terminus, the 156-residue chain is Ribonuclease pancreatic (156 aa).

The signal sequence occupies residues 1–28 (MALEKSLALLPLLVLVLLVLGWVQPSLG). Basic and acidic residues predominate over residues 33–43 (AKKFQRQHMDS). The segment at 33 to 52 (AKKFQRQHMDSDGSPSSNPT) is disordered. 2 residues coordinate substrate: lysine 35 and arginine 38. Histidine 40 functions as the Proton acceptor in the catalytic mechanism. 4 disulfide bridges follow: cysteine 54/cysteine 112, cysteine 68/cysteine 123, cysteine 86/cysteine 138, and cysteine 93/cysteine 100. Residue asparagine 62 is glycosylated (N-linked (GlcNAc...) asparagine). Residue 69–73 (KPVNT) participates in substrate binding. Asparagine 90 is a glycosylation site (N-linked (GlcNAc...) asparagine). Substrate-binding residues include lysine 94 and arginine 113. Asparagine 116 carries an N-linked (GlcNAc...) asparagine glycan. The active-site Proton donor is histidine 147.

The protein belongs to the pancreatic ribonuclease family. Monomer. Interacts with and forms tight 1:1 complexes with RNH1. Dimerization of two such complexes may occur. Interaction with RNH1 inhibits this protein.

Its subcellular location is the secreted. It carries out the reaction an [RNA] containing cytidine + H2O = an [RNA]-3'-cytidine-3'-phosphate + a 5'-hydroxy-ribonucleotide-3'-[RNA].. The catalysed reaction is an [RNA] containing uridine + H2O = an [RNA]-3'-uridine-3'-phosphate + a 5'-hydroxy-ribonucleotide-3'-[RNA].. In terms of biological role, endonuclease that catalyzes the cleavage of RNA on the 3' side of pyrimidine nucleotides. Acts on single-stranded and double-stranded RNA. This Ateles geoffroyi (Black-handed spider monkey) protein is Ribonuclease pancreatic (RNASE1).